A 480-amino-acid chain; its full sequence is NADH-quinone oxidoreductase subunit N (480 aa).

A run of 13 helical transmembrane segments spans residues Ile-13–Ile-33, Pro-41–Thr-61, Val-81–Phe-101, Thr-107–Thr-127, Leu-132–Met-152, Phe-167–Gly-187, Leu-212–Ser-232, Ile-245–Phe-265, Val-276–Ala-296, Ala-314–Phe-334, Ala-373–Trp-393, Leu-413–Ile-433, and Pro-454–Phe-474.

The protein belongs to the complex I subunit 2 family. In terms of assembly, NDH-1 is composed of 14 different subunits. Subunits NuoA, H, J, K, L, M, N constitute the membrane sector of the complex.

Its subcellular location is the cell inner membrane. It carries out the reaction a quinone + NADH + 5 H(+)(in) = a quinol + NAD(+) + 4 H(+)(out). In terms of biological role, NDH-1 shuttles electrons from NADH, via FMN and iron-sulfur (Fe-S) centers, to quinones in the respiratory chain. The immediate electron acceptor for the enzyme in this species is believed to be ubiquinone. Couples the redox reaction to proton translocation (for every two electrons transferred, four hydrogen ions are translocated across the cytoplasmic membrane), and thus conserves the redox energy in a proton gradient. This chain is NADH-quinone oxidoreductase subunit N, found in Leptospira biflexa serovar Patoc (strain Patoc 1 / Ames).